Reading from the N-terminus, the 146-residue chain is Large ribosomal subunit protein uL11 (146 aa).

It belongs to the universal ribosomal protein uL11 family. In terms of assembly, part of the ribosomal stalk of the 50S ribosomal subunit. Interacts with L10 and the large rRNA to form the base of the stalk. L10 forms an elongated spine to which L12 dimers bind in a sequential fashion forming a multimeric L10(L12)X complex. One or more lysine residues are methylated.

In terms of biological role, forms part of the ribosomal stalk which helps the ribosome interact with GTP-bound translation factors. The sequence is that of Large ribosomal subunit protein uL11 from Wolbachia pipientis wMel.